A 490-amino-acid polypeptide reads, in one-letter code: Probable cytosol aminopeptidase (490 aa).

Mn(2+) is bound by residues lysine 262 and aspartate 267. Lysine 274 is an active-site residue. Positions 285, 344, and 346 each coordinate Mn(2+). Arginine 348 is an active-site residue.

It belongs to the peptidase M17 family. Requires Mn(2+) as cofactor.

It is found in the cytoplasm. It catalyses the reaction Release of an N-terminal amino acid, Xaa-|-Yaa-, in which Xaa is preferably Leu, but may be other amino acids including Pro although not Arg or Lys, and Yaa may be Pro. Amino acid amides and methyl esters are also readily hydrolyzed, but rates on arylamides are exceedingly low.. The enzyme catalyses Release of an N-terminal amino acid, preferentially leucine, but not glutamic or aspartic acids.. Presumably involved in the processing and regular turnover of intracellular proteins. Catalyzes the removal of unsubstituted N-terminal amino acids from various peptides. This Xanthomonas axonopodis pv. citri (strain 306) protein is Probable cytosol aminopeptidase.